A 367-amino-acid polypeptide reads, in one-letter code: Histidinol-phosphate aminotransferase (367 aa).

Position 225 is an N6-(pyridoxal phosphate)lysine (K225).

This sequence belongs to the class-II pyridoxal-phosphate-dependent aminotransferase family. Histidinol-phosphate aminotransferase subfamily. As to quaternary structure, homodimer. The cofactor is pyridoxal 5'-phosphate.

It carries out the reaction L-histidinol phosphate + 2-oxoglutarate = 3-(imidazol-4-yl)-2-oxopropyl phosphate + L-glutamate. The protein operates within amino-acid biosynthesis; L-histidine biosynthesis; L-histidine from 5-phospho-alpha-D-ribose 1-diphosphate: step 7/9. This is Histidinol-phosphate aminotransferase from Hyphomonas neptunium (strain ATCC 15444).